Consider the following 190-residue polypeptide: Xanthine phosphoribosyltransferase (190 aa).

Residues Leu20 and Asn27 each coordinate xanthine. 129–133 (ANGRA) provides a ligand contact to 5-phospho-alpha-D-ribose 1-diphosphate. Lys157 lines the xanthine pocket.

The protein belongs to the purine/pyrimidine phosphoribosyltransferase family. Xpt subfamily. Homodimer.

The protein localises to the cytoplasm. It catalyses the reaction XMP + diphosphate = xanthine + 5-phospho-alpha-D-ribose 1-diphosphate. Its pathway is purine metabolism; XMP biosynthesis via salvage pathway; XMP from xanthine: step 1/1. Functionally, converts the preformed base xanthine, a product of nucleic acid breakdown, to xanthosine 5'-monophosphate (XMP), so it can be reused for RNA or DNA synthesis. This is Xanthine phosphoribosyltransferase from Clostridioides difficile (strain 630) (Peptoclostridium difficile).